We begin with the raw amino-acid sequence, 700 residues long: Elongation factor G 2 (700 aa).

The 283-residue stretch at 8–290 folds into the tr-type G domain; that stretch reads ERYRNIGISA…AVIDFLPSPV (283 aa). GTP is bound by residues 17–24, 88–92, and 142–145; these read AHIDAGKT, DTPGH, and NKMD.

Belongs to the TRAFAC class translation factor GTPase superfamily. Classic translation factor GTPase family. EF-G/EF-2 subfamily.

The protein resides in the cytoplasm. Catalyzes the GTP-dependent ribosomal translocation step during translation elongation. During this step, the ribosome changes from the pre-translocational (PRE) to the post-translocational (POST) state as the newly formed A-site-bound peptidyl-tRNA and P-site-bound deacylated tRNA move to the P and E sites, respectively. Catalyzes the coordinated movement of the two tRNA molecules, the mRNA and conformational changes in the ribosome. The sequence is that of Elongation factor G 2 from Burkholderia mallei (strain ATCC 23344).